The primary structure comprises 617 residues: MPALRSRTTTHGRNMAGARALWRATGMTDDDFGKPIVAIANSFTQFVPGHVHLRDLGKIVADAVAGSGGVAKEFNTIAVDDGIAMGHGGMLYSLPSREIIADSVEYMVNAHCADALVCISNCDKITPGMLIAALRLNIPTVFVSGGAMESGHAVVTGGIVRSRLDLIDAMTAAVNPDVSDADLDTIERSACPTCGSCSGMFTANSMNCLTEALGLALPGNGSTLATAAARRGLFVEAGRLVVDLARRYYEKDDEAVLPRSIASAAAFRNAFAVDVAMGGSTNTVLHLLAAAVEAGVEVTLDDIDQVSRSVACLCKVAPSSTDYYMEDVHRAGGIPAILGELDRGGLVDPNVHSVHAASLREFLDRWDVRGADPSPDAIELFHAAPGGVRTVEPFGSTNRWDTLDTDAKNGCIRSVEHAYSADGGLAVLRGNLAPDGAVVKTAGVDESQWTFRGPALVVESQEAAVDAILNKVVKAGDVIIVRYEGPRGGPGMQEMLYPTAFLKGRGLGPKCALITDGRFSGGSSGLSIGHVSPEAAHGGPIALVRDGDLVEIDIPRRRIDLLVPDAELAARRAEIEANGGYHPANRERVVSAALRAYAAMATSASTGAARDVRLITG.

Position 81 (Asp-81) interacts with Mg(2+). Cys-122 lines the [2Fe-2S] cluster pocket. Mg(2+) contacts are provided by Asp-123 and Lys-124. At Lys-124 the chain carries N6-carboxylysine. A [2Fe-2S] cluster-binding site is contributed by Cys-197. A Mg(2+)-binding site is contributed by Glu-494. Catalysis depends on Ser-520, which acts as the Proton acceptor.

Belongs to the IlvD/Edd family. In terms of assembly, homodimer. [2Fe-2S] cluster is required as a cofactor. Mg(2+) serves as cofactor.

It carries out the reaction (2R)-2,3-dihydroxy-3-methylbutanoate = 3-methyl-2-oxobutanoate + H2O. The catalysed reaction is (2R,3R)-2,3-dihydroxy-3-methylpentanoate = (S)-3-methyl-2-oxopentanoate + H2O. The protein operates within amino-acid biosynthesis; L-isoleucine biosynthesis; L-isoleucine from 2-oxobutanoate: step 3/4. It participates in amino-acid biosynthesis; L-valine biosynthesis; L-valine from pyruvate: step 3/4. In terms of biological role, functions in the biosynthesis of branched-chain amino acids. Catalyzes the dehydration of (2R,3R)-2,3-dihydroxy-3-methylpentanoate (2,3-dihydroxy-3-methylvalerate) into 2-oxo-3-methylpentanoate (2-oxo-3-methylvalerate) and of (2R)-2,3-dihydroxy-3-methylbutanoate (2,3-dihydroxyisovalerate) into 2-oxo-3-methylbutanoate (2-oxoisovalerate), the penultimate precursor to L-isoleucine and L-valine, respectively. The sequence is that of Dihydroxy-acid dehydratase from Parafrankia sp. (strain EAN1pec).